A 308-amino-acid chain; its full sequence is Homoserine kinase (308 aa).

ATP is bound at residue proline 95–alanine 105.

The protein belongs to the GHMP kinase family. Homoserine kinase subfamily.

Its subcellular location is the cytoplasm. The enzyme catalyses L-homoserine + ATP = O-phospho-L-homoserine + ADP + H(+). It functions in the pathway amino-acid biosynthesis; L-threonine biosynthesis; L-threonine from L-aspartate: step 4/5. Functionally, catalyzes the ATP-dependent phosphorylation of L-homoserine to L-homoserine phosphate. The sequence is that of Homoserine kinase from Corynebacterium diphtheriae (strain ATCC 700971 / NCTC 13129 / Biotype gravis).